Here is a 1059-residue protein sequence, read N- to C-terminus: Isoleucine--tRNA ligase (1059 aa).

Residues 59–69 (PFANGLPHYGH) carry the 'HIGH' region motif. Residues 637–641 (KMSKS) carry the 'KMSKS' region motif. Lysine 640 is a binding site for ATP.

It belongs to the class-I aminoacyl-tRNA synthetase family. IleS type 2 subfamily. In terms of assembly, monomer. Zn(2+) is required as a cofactor.

The protein localises to the cytoplasm. The catalysed reaction is tRNA(Ile) + L-isoleucine + ATP = L-isoleucyl-tRNA(Ile) + AMP + diphosphate. In terms of biological role, catalyzes the attachment of isoleucine to tRNA(Ile). As IleRS can inadvertently accommodate and process structurally similar amino acids such as valine, to avoid such errors it has two additional distinct tRNA(Ile)-dependent editing activities. One activity is designated as 'pretransfer' editing and involves the hydrolysis of activated Val-AMP. The other activity is designated 'posttransfer' editing and involves deacylation of mischarged Val-tRNA(Ile). The polypeptide is Isoleucine--tRNA ligase (Mycobacterium leprae (strain TN)).